A 453-amino-acid chain; its full sequence is CAAX prenyl protease 1 (453 aa).

Topologically, residues 1 to 12 (MFDLKTILDHPN) are lumenal. A helical transmembrane segment spans residues 13–33 (IPWKLIISGFSIAQFSFESYL). Residues 34-89 (TYRQYQKLSETKLPPVLEDEIDDETFHKSRNYSRAKAKFSIFGDVYNLAQKLVFIK) lie on the Cytoplasmic side of the membrane. A helical membrane pass occupies residues 90 to 110 (YDLFPKIWHMAVSLLNAVLPV). Residues 111–121 (RFHMVSTVAQS) are Lumenal-facing. The chain crosses the membrane as a helical span at residues 122-142 (LCFLGLLSSLSTLVDLPLSYY). The Cytoplasmic segment spans residues 143-167 (SHFVLEEKFGFNKLTVQLWITDMIK). A helical membrane pass occupies residues 168 to 188 (SLTLAYAIGGPILYLFLKIFD). Topologically, residues 189 to 197 (KFPTDFLWY) are lumenal. The helical transmembrane segment at 198 to 218 (IMVFLFVVQILAMTIIPVFIM) threads the bilayer. Over 219-306 (PMFNKFTPLE…HEIGHWQKNH (88 aa)) the chain is Cytoplasmic. H297 contributes to the Zn(2+) binding site. Residue E298 is part of the active site. H301 provides a ligand contact to Zn(2+). A helical transmembrane segment spans residues 307–327 (IVNMVIFSQLHTFLIFSLFTS). Residues 328 to 357 (IYRNTSFYNTFGFFLEKSTGSFVDPVITKE) are Lumenal-facing. The chain crosses the membrane as a helical span at residues 358–378 (FPIIIGFMLFNDLLTPLECAM). Residues 379–453 (QFVMSLISRT…LDYVSEKKKN (75 aa)) lie on the Cytoplasmic side of the membrane. E390 is a Zn(2+) binding site. D394 acts as the Proton donor in catalysis.

The protein belongs to the peptidase M48A family. The cofactor is Zn(2+).

It localises to the endoplasmic reticulum membrane. It carries out the reaction Hydrolyzes the peptide bond -P2-(S-farnesyl or geranylgeranyl)C-P1'-P2'-P3'-COOH where P1' and P2' are amino acids with aliphatic side chains and P3' is any C-terminal residue.. In terms of biological role, proteolytically removes the C-terminal three residues of farnesylated A-factor mating pheromone. Also acts to cleave the N-terminal extension of the pheromone. Does not act on Ras. The chain is CAAX prenyl protease 1 (STE24) from Saccharomyces cerevisiae (strain ATCC 204508 / S288c) (Baker's yeast).